The sequence spans 101 residues: Apolipoprotein C-II (101 aa).

Positions M1–G22 are cleaved as a signal peptide. A lipid binding region spans residues T66–I74. Positions S78 to Q101 are lipoprotein lipase cofactor.

Belongs to the apolipoprotein C2 family. Proapolipoprotein C-II is synthesized as a sialic acid containing glycoprotein which is subsequently desialylated prior to its proteolytic processing. Post-translationally, proapolipoprotein C-II, the major form found in plasma undergoes proteolytic cleavage of its N-terminal hexapeptide to generate apolipoprotein C-II, which occurs as the minor form in plasma.

The protein resides in the secreted. Its function is as follows. Component of chylomicrons, very low-density lipoproteins (VLDL), low-density lipoproteins (LDL), and high-density lipoproteins (HDL) in plasma. Plays an important role in lipoprotein metabolism as an activator of lipoprotein lipase. Both proapolipoprotein C-II and apolipoprotein C-II can activate lipoprotein lipase. This Leptonychotes weddellii (Weddell seal) protein is Apolipoprotein C-II (APOC2).